The primary structure comprises 396 residues: Acetylornithine aminotransferase 2 (396 aa).

Pyridoxal 5'-phosphate-binding positions include 102-103 (GA) and Phe-134. Position 137 (Arg-137) interacts with N(2)-acetyl-L-ornithine. Pyridoxal 5'-phosphate is bound at residue 219 to 222 (DEVQ). Position 248 is an N6-(pyridoxal phosphate)lysine (Lys-248). Residue Thr-276 coordinates pyridoxal 5'-phosphate.

This sequence belongs to the class-III pyridoxal-phosphate-dependent aminotransferase family. ArgD subfamily. Homodimer. The cofactor is pyridoxal 5'-phosphate.

It is found in the cytoplasm. It catalyses the reaction N(2)-acetyl-L-ornithine + 2-oxoglutarate = N-acetyl-L-glutamate 5-semialdehyde + L-glutamate. It functions in the pathway amino-acid biosynthesis; L-arginine biosynthesis; N(2)-acetyl-L-ornithine from L-glutamate: step 4/4. The sequence is that of Acetylornithine aminotransferase 2 from Bordetella bronchiseptica (strain ATCC BAA-588 / NCTC 13252 / RB50) (Alcaligenes bronchisepticus).